The following is a 311-amino-acid chain: Succinate dehydrogenase [ubiquinone] iron-sulfur subunit 2, mitochondrial (311 aa).

Residues 1 to 63 (MILRRTLPRL…EEIRDHRRGD (63 aa)) constitute a mitochondrion transit peptide. The tract at residues 1–70 (MILRRTLPRL…RGDAAAASPA (70 aa)) is disordered. Basic and acidic residues predominate over residues 51 to 63 (AKEEEIRDHRRGD). The 2Fe-2S ferredoxin-type domain maps to 77-168 (FRVYRWSPDA…ATTVTPLPHM (92 aa)). C128, C133, and C148 together coordinate [2Fe-2S] cluster. The region spanning 211–241 (ERKRLDGLYECILCACCSAACPSYWWNAEAF) is the 4Fe-4S ferredoxin-type domain. The [4Fe-4S] cluster site is built by C221, C224, and C227. C231 serves as a coordination point for [3Fe-4S] cluster. Position 236 (W236) interacts with a ubiquinone. [3Fe-4S] cluster-binding residues include C279 and C285. C289 lines the [4Fe-4S] cluster pocket.

Belongs to the succinate dehydrogenase/fumarate reductase iron-sulfur protein family. In terms of assembly, component of complex II composed of eight subunits in plants: four classical SDH subunits SDH1, SDH2, SDH3 and SDH4 (a flavoprotein (FP), an iron-sulfur protein (IP), and a cytochrome b composed of a large and a small subunit.), as well as four subunits unknown in mitochondria from bacteria and heterotrophic eukaryotes. [2Fe-2S] cluster is required as a cofactor. It depends on [3Fe-4S] cluster as a cofactor. The cofactor is [4Fe-4S] cluster.

It localises to the mitochondrion inner membrane. The enzyme catalyses a quinone + succinate = fumarate + a quinol. Its pathway is carbohydrate metabolism; tricarboxylic acid cycle; fumarate from succinate (eukaryal route): step 1/1. In terms of biological role, iron-sulfur protein (IP) subunit of succinate dehydrogenase (SDH) that is involved in complex II of the mitochondrial electron transport chain and is responsible for transferring electrons from succinate to ubiquinone (coenzyme Q). The polypeptide is Succinate dehydrogenase [ubiquinone] iron-sulfur subunit 2, mitochondrial (Oryza sativa subsp. japonica (Rice)).